The sequence spans 338 residues: Formimidoylglutamase (338 aa).

Mn(2+)-binding residues include histidine 137, aspartate 166, histidine 168, aspartate 170, cysteine 259, and aspartate 261.

Belongs to the arginase family. It depends on Mn(2+) as a cofactor.

The catalysed reaction is N-formimidoyl-L-glutamate + H2O = formamide + L-glutamate. It functions in the pathway amino-acid degradation; L-histidine degradation into L-glutamate; L-glutamate from N-formimidoyl-L-glutamate (hydrolase route): step 1/1. Catalyzes the conversion of N-formimidoyl-L-glutamate to L-glutamate and formamide. The chain is Formimidoylglutamase from Clostridium tetani (strain Massachusetts / E88).